Reading from the N-terminus, the 252-residue chain is Small ribosomal subunit protein uS2B (252 aa).

Position 2 is an N-acetylserine (Ser-2). Acidic residues-rich tracts occupy residues 213 to 229 (VAEE…EEVK) and 241 to 252 (EWAEENADNVEW). Residues 213 to 252 (VAEEAAAAEEGEEEEVKEEVTEGQAEATEWAEENADNVEW) are disordered.

This sequence belongs to the universal ribosomal protein uS2 family. As to quaternary structure, component of the small ribosomal subunit. Mature ribosomes consist of a small (40S) and a large (60S) subunit. The 40S subunit contains about 33 different proteins and 1 molecule of RNA (18S). The 60S subunit contains about 49 different proteins and 3 molecules of RNA (25S, 5.8S and 5S). Interacts with RPS21.

Its subcellular location is the cytoplasm. Functionally, required for the assembly and/or stability of the 40S ribosomal subunit. Required for the processing of the 20S rRNA-precursor to mature 18S rRNA in a late step of the maturation of 40S ribosomal subunits. The chain is Small ribosomal subunit protein uS2B from Saccharomyces cerevisiae (strain RM11-1a) (Baker's yeast).